The sequence spans 498 residues: Glycerol kinase (498 aa).

An ADP-binding site is contributed by threonine 12. Residues threonine 12, threonine 13, and serine 14 each contribute to the ATP site. Threonine 12 contacts sn-glycerol 3-phosphate. Arginine 16 contacts ADP. Residues arginine 82, glutamate 83, and tyrosine 134 each contribute to the sn-glycerol 3-phosphate site. Positions 82, 83, and 134 each coordinate glycerol. A Phosphohistidine; by HPr modification is found at histidine 230. Aspartate 244 is a binding site for sn-glycerol 3-phosphate. Glycerol contacts are provided by aspartate 244 and glutamine 245. The ADP site is built by threonine 266 and glycine 309. Residues threonine 266, glycine 309, glutamine 313, and glycine 410 each coordinate ATP. ADP contacts are provided by glycine 410 and asparagine 414.

This sequence belongs to the FGGY kinase family. In terms of assembly, homotetramer and homodimer (in equilibrium). The phosphoenolpyruvate-dependent sugar phosphotransferase system (PTS), including enzyme I, and histidine-containing protein (HPr) are required for the phosphorylation, which leads to the activation of the enzyme.

The enzyme catalyses glycerol + ATP = sn-glycerol 3-phosphate + ADP + H(+). The protein operates within polyol metabolism; glycerol degradation via glycerol kinase pathway; sn-glycerol 3-phosphate from glycerol: step 1/1. Activated by phosphorylation and inhibited by fructose 1,6-bisphosphate (FBP). In terms of biological role, key enzyme in the regulation of glycerol uptake and metabolism. Catalyzes the phosphorylation of glycerol to yield sn-glycerol 3-phosphate. In Staphylococcus aureus (strain Mu50 / ATCC 700699), this protein is Glycerol kinase.